The primary structure comprises 254 residues: Putative epimerase LsrE (254 aa).

Residues 14–34 traverse the membrane as a helical segment; that stretch reads VALLASYPLSVGILAGQWIAL. 3 residues coordinate a divalent metal cation: His-50, Asp-52, and His-81. Asp-52 functions as the Proton acceptor in the catalytic mechanism. Residues His-81, 166–169, 199–201, and 221–222 contribute to the substrate site; these read GYGS, DGS, and GS. Asp-199 provides a ligand contact to a divalent metal cation. Asp-199 serves as the catalytic Proton donor.

This sequence belongs to the ribulose-phosphate 3-epimerase family. It depends on a divalent metal cation as a cofactor.

Its subcellular location is the cell membrane. This is Putative epimerase LsrE (lsrE) from Salmonella paratyphi A (strain ATCC 9150 / SARB42).